Consider the following 430-residue polypeptide: RNA polymerase-associated protein LEO1 (430 aa).

Positions 1–10 (MSSSEGNSDA) are enriched in polar residues. The tract at residues 1–128 (MSSSEGNSDA…SRGSLNDLQG (128 aa)) is disordered. The segment covering 18–30 (KSSTPSSRGSSPD) has biased composition (low complexity). Positions 99–119 (REGKPKESNTRARLSDSDAES) are enriched in basic and acidic residues. Coiled-coil stretches lie at residues 326–347 (TRRE…RTQM) and 409–429 (EEYR…DEES). A disordered region spans residues 349-430 (RNNFKVRGPR…QIVTSDEESD (82 aa)).

The protein belongs to the LEO1 family. In terms of assembly, component of the PAF1 complex which consists of at least cdc-73, ctr-9, leo-1, pafo-1 and rtfo-1.

It is found in the nucleus. It localises to the cytoplasm. In terms of biological role, component of the PAF1 complex which is a multifunctional complex involved in transcription initiation via genetic interactions with TATA-binding proteins, elongation and transcription-coupled histone modification. The protein is RNA polymerase-associated protein LEO1 of Caenorhabditis elegans.